The following is a 222-amino-acid chain: Germin-like protein subfamily 1 member 14 (222 aa).

The N-terminal stretch at Met1–Ala22 is a signal peptide. The cysteines at positions 32 and 49 are disulfide-linked. The Cupin type-1 domain occupies Ser63–Lys214. Residue Asn78 is glycosylated (N-linked (GlcNAc...) asparagine). Mn(2+) is bound by residues His111, His113, Glu118, and His160.

The protein belongs to the germin family. As to quaternary structure, oligomer (believed to be a pentamer but probably hexamer).

It localises to the secreted. The protein resides in the extracellular space. Its subcellular location is the apoplast. Functionally, may play a role in plant defense. Probably has no oxalate oxidase activity even if the active site is conserved. This Arabidopsis thaliana (Mouse-ear cress) protein is Germin-like protein subfamily 1 member 14.